A 442-amino-acid chain; its full sequence is 3-phosphoshikimate 1-carboxyvinyltransferase (442 aa).

3-phosphoshikimate is bound by residues lysine 25, serine 26, and arginine 30. A phosphoenolpyruvate-binding site is contributed by lysine 25. 2 residues coordinate phosphoenolpyruvate: glycine 97 and arginine 125. The 3-phosphoshikimate site is built by serine 170, glutamine 172, aspartate 323, and lysine 350. A phosphoenolpyruvate-binding site is contributed by glutamine 172. Catalysis depends on aspartate 323, which acts as the Proton acceptor. Positions 354 and 399 each coordinate phosphoenolpyruvate.

This sequence belongs to the EPSP synthase family. Monomer.

The protein localises to the cytoplasm. It carries out the reaction 3-phosphoshikimate + phosphoenolpyruvate = 5-O-(1-carboxyvinyl)-3-phosphoshikimate + phosphate. The protein operates within metabolic intermediate biosynthesis; chorismate biosynthesis; chorismate from D-erythrose 4-phosphate and phosphoenolpyruvate: step 6/7. Catalyzes the transfer of the enolpyruvyl moiety of phosphoenolpyruvate (PEP) to the 5-hydroxyl of shikimate-3-phosphate (S3P) to produce enolpyruvyl shikimate-3-phosphate and inorganic phosphate. The polypeptide is 3-phosphoshikimate 1-carboxyvinyltransferase (Bartonella henselae (strain ATCC 49882 / DSM 28221 / CCUG 30454 / Houston 1) (Rochalimaea henselae)).